The following is a 219-amino-acid chain: ER lumen protein-retaining receptor (219 aa).

The Lumenal portion of the chain corresponds to 1 to 5 (MNPFR). The helical transmembrane segment at 6-26 (ILGDLSHLTSILILIHNIKTT) threads the bilayer. Over 27 to 37 (RYIEGISFKTQ) the chain is Cytoplasmic. The next 2 membrane-spanning stretches (helical) occupy residues 38 to 58 (TLYA…HWVS) and 59 to 79 (LYNA…VVLL). Residues 80–98 (QGSKRTNTIAYNEMLMHDT) lie on the Cytoplasmic side of the membrane. A helical membrane pass occupies residues 99–116 (FKIQHLLIGSALMSVFFH). Residues 117–118 (HK) are Lumenal-facing. Residues 119–139 (FTFLELAWSFSVWLESVAILP) form a helical membrane-spanning segment. At 140–152 (QLYMLSKGGKTRS) the chain is on the cytoplasmic side. Residues 153–173 (LTVHYIFAMGLYRALYIPNWI) form a helical membrane-spanning segment. The Lumenal portion of the chain corresponds to 174–185 (WRYSTEDKKLDK). Residues 186-206 (IAFFAGLLQTLLYSDFFYIYY) traverse the membrane as a helical segment. The Cytoplasmic portion of the chain corresponds to 207-219 (TKVIRGKGFKLPK).

It belongs to the ERD2 family.

Its subcellular location is the endoplasmic reticulum membrane. Its function is as follows. Required for the retention of luminal endoplasmic reticulum proteins. Determines the specificity of the luminal ER protein retention system. Also required for normal vesicular traffic through the Golgi. This receptor strongly recognizes H-D-E-L and weakly recognizes D-D-E-L and K-D-E-L. The sequence is that of ER lumen protein-retaining receptor from Saccharomyces cerevisiae (strain ATCC 204508 / S288c) (Baker's yeast).